We begin with the raw amino-acid sequence, 400 residues long: MLCDRLWRNARLATLAEGAPGLGLVEDGLIAARDGRILYAGPARAAPAFAARETVDCEGRWITPGLIDCHTHLVHGGDRAAEFEARLAGASYEEIARAGGGIVSTVRATRAASEDALVGSALRRLDALIAEGVTAVEVKSGYGLSVASERASLRAARRLGESRDVTVTTTFLGAHALPPEEPDKDRYIAHVCTEMLPALAREGLADAVDAFCEGIAFSPAQTARVFEAARAAGLPVKLHADQLSDLGGAALAARFGALSADHLEYADEAGAAALARAGTVAVLLPGAFYFIRETRRPPVDLFRRHGTRMALATDCNPGTSPLTSLLLVLNMGATLFRLTVEECLAGVTREAARALGRLHEIGTLEAGKWCDLAVWDVERPAELVYRMGFNPLHARIRRGR.

Positions 70 and 72 each coordinate Fe(3+). 2 residues coordinate Zn(2+): His70 and His72. Residues Arg79, Tyr142, and His175 each coordinate 4-imidazolone-5-propanoate. Position 142 (Tyr142) interacts with N-formimidoyl-L-glutamate. Residue His239 coordinates Fe(3+). Position 239 (His239) interacts with Zn(2+). Gln242 contacts 4-imidazolone-5-propanoate. Asp314 lines the Fe(3+) pocket. Residue Asp314 participates in Zn(2+) binding. N-formimidoyl-L-glutamate contacts are provided by Asn316 and Gly318. Residue Thr319 coordinates 4-imidazolone-5-propanoate.

This sequence belongs to the metallo-dependent hydrolases superfamily. HutI family. It depends on Zn(2+) as a cofactor. Fe(3+) serves as cofactor.

The protein localises to the cytoplasm. It carries out the reaction 4-imidazolone-5-propanoate + H2O = N-formimidoyl-L-glutamate. It functions in the pathway amino-acid degradation; L-histidine degradation into L-glutamate; N-formimidoyl-L-glutamate from L-histidine: step 3/3. In terms of biological role, catalyzes the hydrolytic cleavage of the carbon-nitrogen bond in imidazolone-5-propanoate to yield N-formimidoyl-L-glutamate. It is the third step in the universal histidine degradation pathway. This chain is Imidazolonepropionase, found in Methylobacterium sp. (strain 4-46).